Here is a 166-residue protein sequence, read N- to C-terminus: Cyclic pyranopterin monophosphate synthase (166 aa).

Residues 75-77 (LCH) and 113-114 (ME) each bind substrate. The active site involves aspartate 128.

This sequence belongs to the MoaC family. Homohexamer; trimer of dimers.

It catalyses the reaction (8S)-3',8-cyclo-7,8-dihydroguanosine 5'-triphosphate = cyclic pyranopterin phosphate + diphosphate. The protein operates within cofactor biosynthesis; molybdopterin biosynthesis. In terms of biological role, catalyzes the conversion of (8S)-3',8-cyclo-7,8-dihydroguanosine 5'-triphosphate to cyclic pyranopterin monophosphate (cPMP). The protein is Cyclic pyranopterin monophosphate synthase of Thermomicrobium roseum (strain ATCC 27502 / DSM 5159 / P-2).